Here is a 346-residue protein sequence, read N- to C-terminus: Biotin synthase (346 aa).

Residues 38–256 (QQVQVSTLLS…IAVARIMMPT (219 aa)) form the Radical SAM core domain. [4Fe-4S] cluster is bound by residues Cys53, Cys57, and Cys60. Residues Cys97, Cys128, Cys188, and Arg260 each contribute to the [2Fe-2S] cluster site.

It belongs to the radical SAM superfamily. Biotin synthase family. In terms of assembly, homodimer. [4Fe-4S] cluster is required as a cofactor. The cofactor is [2Fe-2S] cluster.

It catalyses the reaction (4R,5S)-dethiobiotin + (sulfur carrier)-SH + 2 reduced [2Fe-2S]-[ferredoxin] + 2 S-adenosyl-L-methionine = (sulfur carrier)-H + biotin + 2 5'-deoxyadenosine + 2 L-methionine + 2 oxidized [2Fe-2S]-[ferredoxin]. It functions in the pathway cofactor biosynthesis; biotin biosynthesis; biotin from 7,8-diaminononanoate: step 2/2. Functionally, catalyzes the conversion of dethiobiotin (DTB) to biotin by the insertion of a sulfur atom into dethiobiotin via a radical-based mechanism. The polypeptide is Biotin synthase (Citrobacter koseri (strain ATCC BAA-895 / CDC 4225-83 / SGSC4696)).